Here is a 247-residue protein sequence, read N- to C-terminus: Leucyl/phenylalanyl-tRNA--protein transferase (247 aa).

The protein belongs to the L/F-transferase family.

The protein resides in the cytoplasm. The enzyme catalyses N-terminal L-lysyl-[protein] + L-leucyl-tRNA(Leu) = N-terminal L-leucyl-L-lysyl-[protein] + tRNA(Leu) + H(+). It catalyses the reaction N-terminal L-arginyl-[protein] + L-leucyl-tRNA(Leu) = N-terminal L-leucyl-L-arginyl-[protein] + tRNA(Leu) + H(+). The catalysed reaction is L-phenylalanyl-tRNA(Phe) + an N-terminal L-alpha-aminoacyl-[protein] = an N-terminal L-phenylalanyl-L-alpha-aminoacyl-[protein] + tRNA(Phe). Functions in the N-end rule pathway of protein degradation where it conjugates Leu, Phe and, less efficiently, Met from aminoacyl-tRNAs to the N-termini of proteins containing an N-terminal arginine or lysine. This chain is Leucyl/phenylalanyl-tRNA--protein transferase, found in Solidesulfovibrio magneticus (strain ATCC 700980 / DSM 13731 / RS-1) (Desulfovibrio magneticus).